A 221-amino-acid polypeptide reads, in one-letter code: Octanoyltransferase (221 aa).

Residues 35 to 221 (ESYENRIIFC…RELLAALLSK (187 aa)) enclose the BPL/LPL catalytic domain. Residues 80-87 (RGGDITYH), 152-154 (AIG), and 165-167 (GLA) each bind substrate. The active-site Acyl-thioester intermediate is C183.

Belongs to the LipB family.

The protein resides in the cytoplasm. The enzyme catalyses octanoyl-[ACP] + L-lysyl-[protein] = N(6)-octanoyl-L-lysyl-[protein] + holo-[ACP] + H(+). The protein operates within protein modification; protein lipoylation via endogenous pathway; protein N(6)-(lipoyl)lysine from octanoyl-[acyl-carrier-protein]: step 1/2. Catalyzes the transfer of endogenously produced octanoic acid from octanoyl-acyl-carrier-protein onto the lipoyl domains of lipoate-dependent enzymes. Lipoyl-ACP can also act as a substrate although octanoyl-ACP is likely to be the physiological substrate. This chain is Octanoyltransferase, found in Bacteroides fragilis (strain YCH46).